Reading from the N-terminus, the 285-residue chain is Iodotyrosine deiodinase 1 (285 aa).

The helical transmembrane segment at 1 to 21 (MFLLTPVLVAVVCILVIWVFK) threads the bilayer. FMN is bound by residues 96–100 (RRSIR) and 124–125 (SG). Residues Ala126, Glu153, Tyr157, and Lys178 each contribute to the 3,5-diiodo-L-tyrosine site. 3-iodo-L-tyrosine contacts are provided by Ala126, Glu153, Tyr157, and Lys178. Residues 233 to 235 (TTT) and Arg275 contribute to the FMN site.

The protein belongs to the nitroreductase family. In terms of assembly, homodimer. It depends on FMN as a cofactor.

The protein localises to the cell membrane. It localises to the cytoplasmic vesicle membrane. The catalysed reaction is 2 iodide + L-tyrosine + 2 NADP(+) = 3,5-diiodo-L-tyrosine + 2 NADPH + H(+). It carries out the reaction iodide + L-tyrosine + NADP(+) = 3-iodo-L-tyrosine + NADPH. It catalyses the reaction 3-iodo-L-tyrosine + iodide + NADP(+) = 3,5-diiodo-L-tyrosine + NADPH + H(+). The enzyme catalyses L-tyrosine + chloride + NADP(+) = 3-chloro-L-tyrosine + NADPH. The catalysed reaction is bromide + L-tyrosine + NADP(+) = 3-bromo-L-tyrosine + NADPH. Functionally, catalyzes the dehalogenation of halotyrosines such as 3-bromo-L-tyrosine, 3-chloro-L-tyrosine, 3-iodo-L-tyrosine and 3,5-diiodo-L-tyrosine. During thyroid hormone biosynthesis, facilitates iodide salvage by catalysing the oxidative NADPH-dependent deiodination of the halogenated by-products of thyroid hormone production, monoiodotyrosine (L-MIT) and diiodotyrosine (L-DIT). The scavanged iodide can then reenter the hormone-producing pathways. Acts more efficiently on 3-iodo-L-tyrosine than 3,5-diiodo-L-tyrosine. This is Iodotyrosine deiodinase 1 (Iyd) from Rattus norvegicus (Rat).